We begin with the raw amino-acid sequence, 126 residues long: Protein mmf2, mitochondrial (126 aa).

The protein belongs to the RutC family.

It is found in the mitochondrion. The protein resides in the cytoplasm. Functionally, plays a role in the maintenance of mitochondrial DNA. The polypeptide is Protein mmf2, mitochondrial (mmf2) (Schizosaccharomyces pombe (strain 972 / ATCC 24843) (Fission yeast)).